The primary structure comprises 344 residues: Lipase chaperone (344 aa).

The chain crosses the membrane as a helical span at residues 14–34 (AMVYGVVGLAAIAGVAMWSGA).

It belongs to the lipase chaperone family.

The protein resides in the cell inner membrane. May be involved in the folding of the extracellular lipase during its passage through the periplasm. The protein is Lipase chaperone of Burkholderia lata (strain ATCC 17760 / DSM 23089 / LMG 22485 / NCIMB 9086 / R18194 / 383).